Here is an 810-residue protein sequence, read N- to C-terminus: Protein kinase C-binding protein NELL1 (810 aa).

The N-terminal stretch at 1 to 21 (MPMDVILVLWFCVCTARTVLG) is a signal peptide. N-linked (GlcNAc...) asparagine glycans are attached at residues N40, N53, N83, N224, N294, and N372. One can recognise a Laminin G-like domain in the interval 57-227 (AFLFQDVQRE…TQCPNLNRTC (171 aa)). Positions 271–332 (KTCQVSGLLY…ISGQCCKVCR (62 aa)) constitute a VWFC 1 domain. 3 cysteine pairs are disulfide-bonded: C395/C407, C401/C416, and C418/C432. Residues D434, I435, and E437 each contribute to the Ca(2+) site. Residues 434–475 (DIDECAAKMHYCHANTVCVNLPGLYRCDCVPGYIRVDDFSCT) form the EGF-like 1; calcium-binding domain. 15 cysteine pairs are disulfide-bonded: C438/C451, C445/C460, C462/C474, C480/C493, C487/C502, C504/C515, C519/C529, C523/C535, C537/C546, C553/C566, C560/C575, C577/C594, C600/C613, C607/C622, and C624/C630. 3 residues coordinate Ca(2+): N453, L454, and L457. An EGF-like 2; calcium-binding domain is found at 476–516 (EHDDCGSGQHNCDKNAICTNTVQGHSCTCQPGYVGNGTICK). The N-linked (GlcNAc...) asparagine glycan is linked to N511. An EGF-like 3 domain is found at 517 to 547 (AFCEEGCRYGGTCVAPNKCVCPSGFTGSHCE). An EGF-like 4; calcium-binding domain is found at 549-587 (DIDECAEGFVECHNHSRCVNLPGWYHCECRSGFHDDGTY). The N-linked (GlcNAc...) asparagine glycan is linked to N562. The 36-residue stretch at 596–631 (DIDECALRTHTCWNDSACINLAGGFDCLCPSGPSCS) folds into the EGF-like 5; calcium-binding domain. An N-linked (GlcNAc...) asparagine glycan is attached at N609. VWFC domains follow at residues 632-687 (GDCP…PECD) and 692-750 (SQCL…PRCV). N708 carries an N-linked (GlcNAc...) asparagine glycan.

In terms of assembly, interacts with ATRAID; the interaction promotes osteoblast cell differentiation and mineralization. Homotrimer. Binds to PKC beta-1. Interacts with ROBO3.

Its subcellular location is the cytoplasm. The protein localises to the nucleus envelope. It localises to the secreted. Plays a role in the control of cell growth and differentiation. Promotes osteoblast cell differentiation and terminal mineralization. The protein is Protein kinase C-binding protein NELL1 (Nell1) of Rattus norvegicus (Rat).